A 130-amino-acid chain; its full sequence is Histidine triad nucleotide-binding protein 1 (130 aa).

The region spanning 22 to 130 (LFGKIIRKEI…GGRQLQWPPG (109 aa)) is the HIT domain. The Histidine triad motif signature appears at 114 to 118 (HLHLH).

The polypeptide is Histidine triad nucleotide-binding protein 1 (hint-1) (Caenorhabditis elegans).